Here is a 140-residue protein sequence, read N- to C-terminus: Nucleoside diphosphate kinase (140 aa).

6 residues coordinate ATP: Lys11, Phe59, Arg87, Thr93, Arg104, and Asn114. Residue His117 is the Pros-phosphohistidine intermediate of the active site.

The protein belongs to the NDK family. As to quaternary structure, homotetramer. Mg(2+) is required as a cofactor.

Its subcellular location is the cytoplasm. The enzyme catalyses a 2'-deoxyribonucleoside 5'-diphosphate + ATP = a 2'-deoxyribonucleoside 5'-triphosphate + ADP. The catalysed reaction is a ribonucleoside 5'-diphosphate + ATP = a ribonucleoside 5'-triphosphate + ADP. Functionally, major role in the synthesis of nucleoside triphosphates other than ATP. The ATP gamma phosphate is transferred to the NDP beta phosphate via a ping-pong mechanism, using a phosphorylated active-site intermediate. The protein is Nucleoside diphosphate kinase of Rhizorhabdus wittichii (strain DSM 6014 / CCUG 31198 / JCM 15750 / NBRC 105917 / EY 4224 / RW1) (Sphingomonas wittichii).